The chain runs to 450 residues: Probable ECA polymerase (450 aa).

Helical transmembrane passes span 6-26 (FSGLFVVWLLCTLFIATLTWF), 37-57 (VFFSLLFLLTFFFGFPLTSVL), 63-83 (VGVAPPEILLQALLSAGCFYA), 118-138 (VILMGIALVSVGIFFMHNGFL), 155-175 (GVALKRFFYFFIPAMLVVYFL), 181-201 (AWLFFLVSTVAFGLLTYMIVG), 207-227 (IIIAFAIFLFIGIIRGWISLW), 228-248 (MLAAAGVLGIVGMFWLALKRY), 341-361 (LVVMGGALFIPLGAIVVGLII), 378-398 (YKAAILHSFCFGAIFNMIVLA), and 410-430 (VFFIVVFGACLMIAKLLYWLF).

This sequence belongs to the WzyE family. Probably part of a complex composed of WzxE, WzyE and WzzE.

It localises to the cell inner membrane. The protein operates within bacterial outer membrane biogenesis; enterobacterial common antigen biosynthesis. Its function is as follows. Probably involved in the polymerization of enterobacterial common antigen (ECA) trisaccharide repeat units. The chain is Probable ECA polymerase from Escherichia coli O127:H6 (strain E2348/69 / EPEC).